The chain runs to 199 residues: Ribonuclease HII (199 aa).

Positions 10–199 (HLVAGVDEVG…VKRALGLASN (190 aa)) constitute an RNase H type-2 domain. Positions 16, 17, and 108 each coordinate a divalent metal cation.

Belongs to the RNase HII family. Requires Mn(2+) as cofactor. The cofactor is Mg(2+).

Its subcellular location is the cytoplasm. It carries out the reaction Endonucleolytic cleavage to 5'-phosphomonoester.. Functionally, endonuclease that specifically degrades the RNA of RNA-DNA hybrids. This Klebsiella pneumoniae (strain 342) protein is Ribonuclease HII.